A 174-amino-acid chain; its full sequence is ATP synthase subunit d, mitochondrial (174 aa).

Ser-2 is modified (N-acetylserine).

It belongs to the ATPase d subunit family. As to quaternary structure, F-type ATPases have 2 components, CF(1) - the catalytic core - and CF(0) - the membrane proton channel. In yeast, the dimeric form of ATP synthase consists of 17 polypeptides: alpha, beta, gamma, delta, epsilon, 4 (B), 5 (OSCP), 6 (A), 8, 9 (C), d, E (Tim11), f, g, h, i/j and k.

It localises to the mitochondrion. It is found in the mitochondrion inner membrane. Mitochondrial membrane ATP synthase (F(1)F(0) ATP synthase or Complex V) produces ATP from ADP in the presence of a proton gradient across the membrane which is generated by electron transport complexes of the respiratory chain. F-type ATPases consist of two structural domains, F(1) - containing the extramembraneous catalytic core, and F(0) - containing the membrane proton channel, linked together by a central stalk and a peripheral stalk. During catalysis, ATP synthesis in the catalytic domain of F(1) is coupled via a rotary mechanism of the central stalk subunits to proton translocation. Part of the complex F(0) domain and the peripheric stalk, which acts as a stator to hold the catalytic alpha(3)beta(3) subcomplex and subunit a/ATP6 static relative to the rotary elements. This is ATP synthase subunit d, mitochondrial (ATP7) from Saccharomyces cerevisiae (strain ATCC 204508 / S288c) (Baker's yeast).